A 339-amino-acid polypeptide reads, in one-letter code: Caspase drICE (339 aa).

Positions 1 to 28 (MDATNNGESADQVGIRVGNPEQPNDHTD) are excised as a propeptide. The disordered stretch occupies residues 1-45 (MDATNNGESADQVGIRVGNPEQPNDHTDALGSVGSGGAGSSGLVA). Active-site residues include His169 and Cys211. Residues 218 to 230 (GGVTMQRSQTETD) constitute a propeptide that is removed on maturation.

This sequence belongs to the peptidase C14A family. As to quaternary structure, heterotetramer that consists of two anti-parallel arranged heterodimers, each one formed by a 21 kDa (p21) and a 12 kDa (p12) subunit. Inactive pro-form can homodimerize. Dronc and Drice can form a stable complex. Interacts with Diap2 (via BIR3 domain) to form a stable complex. May interact with some isoforms of Dark.

Its activity is regulated as follows. Zymogen activated by proteolytic cleavage; cleaved by the initiator caspase Dronc upon apoptosis induction. Involved in the activation cascade of caspases responsible for apoptosis execution. Acts downstream of rpr. Cleaves baculovirus p35 and lamin DmO in vitro. In Drosophila melanogaster (Fruit fly), this protein is Caspase drICE (Drice).